Here is a 194-residue protein sequence, read N- to C-terminus: MTVTTEDRTTGARPVPRLKQRYREEIAATLREEFSYRNVMQIPGVVKVVVNMGVGDAARDAKLIDGAVRDLAAITGQKPAVRRAKKSIAQFKLREGMPIGAKVTLRGDRMWEFLDRLVSIALPRIRDFRGLSPKQFDGAGNYTFGVTEQSIFHEIDIDRIDRVRGMDITVVTTATTDDEGRALLRALGFPFREN.

The protein belongs to the universal ribosomal protein uL5 family. As to quaternary structure, part of the 50S ribosomal subunit; part of the 5S rRNA/L5/L18/L25 subcomplex. Contacts the 5S rRNA and the P site tRNA. Forms a bridge to the 30S subunit in the 70S ribosome.

This is one of the proteins that bind and probably mediate the attachment of the 5S RNA into the large ribosomal subunit, where it forms part of the central protuberance. In the 70S ribosome it contacts protein S13 of the 30S subunit (bridge B1b), connecting the 2 subunits; this bridge is implicated in subunit movement. Contacts the P site tRNA; the 5S rRNA and some of its associated proteins might help stabilize positioning of ribosome-bound tRNAs. This is Large ribosomal subunit protein uL5 from Frankia alni (strain DSM 45986 / CECT 9034 / ACN14a).